The primary structure comprises 550 residues: Urocanate hydratase (550 aa).

NAD(+) contacts are provided by residues 48–49, glutamine 126, 172–174, glutamate 192, arginine 197, 238–239, 259–263, 268–269, and tyrosine 317; these read GG, GMG, NA, QTSAH, and YL. Cysteine 405 is an active-site residue. Glycine 487 contributes to the NAD(+) binding site.

This sequence belongs to the urocanase family. NAD(+) serves as cofactor.

It localises to the cytoplasm. The enzyme catalyses 4-imidazolone-5-propanoate = trans-urocanate + H2O. It functions in the pathway amino-acid degradation; L-histidine degradation into L-glutamate; N-formimidoyl-L-glutamate from L-histidine: step 2/3. In terms of biological role, catalyzes the conversion of urocanate to 4-imidazolone-5-propionate. This is Urocanate hydratase from Saccharopolyspora erythraea (strain ATCC 11635 / DSM 40517 / JCM 4748 / NBRC 13426 / NCIMB 8594 / NRRL 2338).